Reading from the N-terminus, the 193-residue chain is Ion-translocating oxidoreductase complex subunit A (193 aa).

6 consecutive transmembrane segments (helical) span residues 4 to 24 (LALI…KFLG), 38 to 58 (AMGM…CSYL), 65 to 85 (APLG…AVVV), 102 to 122 (VLGI…VALL), 134 to 154 (AVYG…FAAL), and 171 to 191 (SVAL…AGLV).

The protein belongs to the NqrDE/RnfAE family. As to quaternary structure, the complex is composed of six subunits: RnfA, RnfB, RnfC, RnfD, RnfE and RnfG.

Its subcellular location is the cell inner membrane. In terms of biological role, part of a membrane-bound complex that couples electron transfer with translocation of ions across the membrane. In Alkalilimnicola ehrlichii (strain ATCC BAA-1101 / DSM 17681 / MLHE-1), this protein is Ion-translocating oxidoreductase complex subunit A.